The chain runs to 348 residues: Lysophosphatidic acid receptor 2 (348 aa).

Residues 1–30 (MGQCYYNETIGFFYNNSGKELSSHWRPKDV) lie on the Extracellular side of the membrane. Residues N7 and N15 are each glycosylated (N-linked (GlcNAc...) asparagine). The chain crosses the membrane as a helical span at residues 31–51 (VVVALGLTVSVLVLLTNLLVI). Residues 52-66 (AAIASNRRFHQPIYY) lie on the Cytoplasmic side of the membrane. The chain crosses the membrane as a helical span at residues 67–87 (LLGNLAAADLFAGVAYLFLMF). Residues 88–100 (HTGPRTARLSLEG) lie on the Extracellular side of the membrane. The helical transmembrane segment at 101 to 123 (WFLRQGLLDTSLTASVATLLAIA) threads the bilayer. Residues 124–143 (VERHRSVMAVQLHSRLPRGR) are Cytoplasmic-facing. The helical transmembrane segment at 144–164 (VVMLIVGVWVAALGLGLLPAH) threads the bilayer. Residues 165 to 185 (SWHCLCALDRCSRMAPLLSRS) lie on the Extracellular side of the membrane. The chain crosses the membrane as a helical span at residues 186–206 (YLAVWALSSLLVFLLMVAVYT). Topologically, residues 207–239 (RIFFYVRRRVQRMAEHVSCHPRYRETTLSLVKT) are cytoplasmic. A helical membrane pass occupies residues 240 to 260 (VVIILGAFVVCWTPGQVVLLL). The Extracellular segment spans residues 261–276 (DGLGCESCNVLAVEKY). A helical membrane pass occupies residues 277–294 (FLLLAEANSLVNAAVYSC). Residues 295–348 (RDAEMRRTFRRLLCCACLRQSTRESVHYTSSAQGGASTRIMLPENGHPLMDSTL) lie on the Cytoplasmic side of the membrane. C308 carries S-palmitoyl cysteine lipidation. The short motif at 345 to 348 (DSTL) is the PDZ-binding element.

It belongs to the G-protein coupled receptor 1 family. In terms of assembly, interacts with SLC9A3R2/NHERF2, MAGI3 and PLCB3. Interacts with RALA and GRK2. In terms of tissue distribution, expressed most abundantly in testes and peripheral blood leukocytes with less expression in pancreas, spleen, thymus and prostate. Little or no expression in heart, brain, placenta, lung, liver, skeletal muscle, kidney, ovary, small intestine, or colon.

Its subcellular location is the cell surface. It localises to the cell membrane. Receptor for lysophosphatidic acid (LPA), a mediator of diverse cellular activities. Seems to be coupled to the G(i)/G(o), G(12)/G(13), and G(q) families of heteromeric G proteins. Plays a key role in phospholipase C-beta (PLC-beta) signaling pathway. Stimulates phospholipase C (PLC) activity in a manner that is independent of RALA activation. This is Lysophosphatidic acid receptor 2 from Homo sapiens (Human).